The primary structure comprises 247 residues: AA9 family lytic polysaccharide monooxygenase A (247 aa).

The signal sequence occupies residues 1–19; the sequence is MVRLASLAVLGSVIATASA. Cu(2+)-binding residues include His20 and His100. Cys60 and Cys185 form a disulfide bridge. O2 is bound at residue His165. Tyr182 is a binding site for Cu(2+). A glycan (N-linked (GlcNAc...) asparagine) is linked at Asn193.

It belongs to the polysaccharide monooxygenase AA9 family. It depends on Cu(2+) as a cofactor.

The protein resides in the secreted. It carries out the reaction [(1-&gt;4)-beta-D-glucosyl]n+m + reduced acceptor + O2 = 4-dehydro-beta-D-glucosyl-[(1-&gt;4)-beta-D-glucosyl]n-1 + [(1-&gt;4)-beta-D-glucosyl]m + acceptor + H2O.. In terms of biological role, lytic polysaccharide monooxygenase (LPMO) that depolymerizes polysaccharides via the oxidation of scissile alpha- or beta-(1-4)-glycosidic bonds, yielding C4 oxidation products. Catalysis by LPMOs requires the reduction of the active-site copper from Cu(II) to Cu(I) by a reducing agent and H(2)O(2) or O(2) as a cosubstrate. Shows C4-oxidative cleavage of amorphous cellulose and soluble cello-oligosaccharides. Also active on xyloglucan, mixed-linkage beta-glucan, and glucomannan. Not active on crystalline forms of cellulose. Has higher affinity for linear substrates compared to branched substrates. Catalyzes a fast and specific peroxygenase reaction that is at least two orders of magnitude faster than the apparent monooxygenase reaction. The protein is AA9 family lytic polysaccharide monooxygenase A of Schizophyllum commune (strain H4-8 / FGSC 9210) (Split gill fungus).